The following is a 1079-amino-acid chain: Electrogenic sodium bicarbonate cotransporter 1 (1079 aa).

A required for interaction with AHCYL1 region spans residues 1 to 62 (MEDEAALDRG…EKKEKERVSE (62 aa)). Topologically, residues 1 to 466 (MEDEAALDRG…FASDFYDALN (466 aa)) are cytoplasmic. Tyrosine 30 is modified (phosphotyrosine). Positions 39–52 (YRRRRRHKRKAGHR) are enriched in basic residues. The tract at residues 39 to 78 (YRRRRRHKRKAGHREKKEKERVSENYSDKSDVENADESSS) is disordered. The span at 53-70 (EKKEKERVSENYSDKSDV) shows a compositional bias: basic and acidic residues. Serine 61, serine 65, serine 68, serine 223, serine 232, serine 233, and serine 245 each carry phosphoserine. A disordered region spans residues 238–265 (FTSPENGSPAMTHRNLTSSSLNDISDKP). Phosphothreonine occurs at positions 249 and 254. Residues 251–260 (RNLTSSSLND) show a composition bias toward polar residues. Phosphoserine occurs at positions 256, 257, and 262. A helical membrane pass occupies residues 467-491 (IQALSAILFIYLATVTNAITFGGLL). At 492 to 501 (GDATDNMQGV) the chain is on the extracellular side. The chain crosses the membrane as a helical span at residues 502–520 (LESFLGTAVSGAVFCLFAG). Glutamine 521 is a topological domain (cytoplasmic). The chain crosses the membrane as a discontinuously helical span at residues 522-542 (PLTILSSTGPVLVFERLLFNF). Residues 543–550 (SKDHNFDY) lie on the Extracellular side of the membrane. Residues 551–571 (LEFRLWIGLWSAFLCLILVAT) traverse the membrane as a helical segment. Over 572 to 585 (DASFLVQYFTRFTE) the chain is Cytoplasmic. Residues 586–609 (EGFSSLISFIFIYDAFKKMIKLAD) form a helical membrane-spanning segment. Residues 610–692 (YYPINSNFKV…GNNCDFVPDI (83 aa)) are Extracellular-facing. Residues 693–710 (TLMSFILFLGTYTSSMAL) traverse the membrane as a helical segment. The Cytoplasmic segment spans residues 711–725 (KKFKTSRYFPTTARK). A helical membrane pass occupies residues 726 to 745 (LISDFAIILSILIFCVIDAL). The Extracellular portion of the chain corresponds to 746 to 779 (VGVDTPKLIVPSEFKPTSPNRGWFVPPFGGNPWW). Residues 748-779 (VDTPKLIVPSEFKPTSPNRGWFVPPFGGNPWW) form an interaction with CA4 region. A helical transmembrane segment spans residues 780 to 807 (VYLAAAIPALLVTILIFMDQQITAVIVN). Residues 808 to 819 (RKEHKLKKGAGY) lie on the Cytoplasmic side of the membrane. Residues 820–836 (HLDLFWVAILMVVCSFM) form a helical membrane-spanning segment. Residue alanine 837 is a topological domain, extracellular. The chain crosses the membrane as a discontinuously helical span at residues 838 to 855 (LPWYVAATVISIAHIDSL). At 856 to 877 (KMETETSAPGEQPKFLGVREQR) the chain is on the cytoplasmic side. A helical membrane pass occupies residues 878 to 894 (VTGTLVFILTGLSVFMA). The Extracellular segment spans residues 895–901 (PILKFIP). A helical transmembrane segment spans residues 902 to 918 (MPVLYGVFLYMGVASLN). At 919 to 960 (GVQFMDRLKLLLMPLKHQPDFIYLRHVPLRRVHLFTFLQVLC) the chain is on the cytoplasmic side. The discontinuously helical intramembrane region spans 961 to 986 (LALLWILKSTVAAIIFPVMILALVAV). The Cytoplasmic segment spans residues 987-1079 (RKGMDYLFSQ…PTFLERHTSC (93 aa)). The CA2-binding stretch occupies residues 1002–1004 (LDD). Positions 1012–1079 (KKKEDEKKKK…PTFLERHTSC (68 aa)) are disordered. Residue serine 1026 is modified to Phosphoserine; by PKA. Serine 1029 is subject to Phosphoserine. Residues 1030 to 1033 (DSDD) are CA2-binding. Residues serine 1034 and serine 1044 each carry the phosphoserine modification. A required for basolateral targeting region spans residues 1057 to 1059 (FLS). A compositionally biased stretch (basic and acidic residues) spans 1062–1079 (KPSDRERSPTFLERHTSC). The residue at position 1069 (serine 1069) is a Phosphoserine.

Belongs to the anion exchanger (TC 2.A.31) family. In terms of assembly, homodimer. Interacts with CA2/carbonic anhydrase 2 and CA4/carbonic anhydrase 4 which may regulate transporter activity. Isoform 1 but not isoform 2 interacts with AHCYL1 (via PEST domain when phosphorylated); the interaction increases SLC4A4 isoform 1 activity. Interacts with AHCYL2. Post-translationally, phosphorylation of Ser-1026 by PKA increases the binding of CA2 and changes the Na(+):HCO3(-) stoichiometry of the transporter from 3:1 to 2:1. Phosphorylated in presence of STK39 and dephosphorylated in presence of PP1 phosphatase; phosphorylation seems to inhibit SLC4A4 activity. In terms of processing, N-glycosylated. May not be necessary for the transporter basic functions. Expressed in vas deferens epithelia (at protein level).

The protein resides in the basolateral cell membrane. It localises to the cell membrane. It carries out the reaction 2 hydrogencarbonate(out) + Na(+)(out) = 2 hydrogencarbonate(in) + Na(+)(in). The catalysed reaction is 3 hydrogencarbonate(out) + Na(+)(out) = 3 hydrogencarbonate(in) + Na(+)(in). In terms of biological role, electrogenic sodium/bicarbonate cotransporter with a Na(+):HCO3(-) stoichiometry varying from 1:2 to 1:3. May regulate bicarbonate influx/efflux at the basolateral membrane of cells and regulate intracellular pH. The sequence is that of Electrogenic sodium bicarbonate cotransporter 1 (SLC4A4) from Sus scrofa (Pig).